The sequence spans 33 residues: Non-specific lipid-transfer protein (33 aa).

A disulfide bridge links cysteine 14 with cysteine 29.

It belongs to the plant LTP family. In terms of assembly, dimer.

Its function is as follows. Plant non-specific lipid-transfer proteins transfer phospholipids as well as galactolipids across membranes. May play a role in wax or cutin deposition in the cell walls of expanding epidermal cells and certain secretory tissues. Has antibacterial activity against Gram-positive bacteria S.aureus and S.epidermidis and blocks biofilm formation. In a mouse model, also protects against bacterial sepsis and has an anti-inflammatory effect. Exhibits antinociceptive activity upon oral or intraperitoneal application in mice. The protein is Non-specific lipid-transfer protein of Morinda citrifolia (Indian mulberry).